The chain runs to 223 residues: Sigma non-opioid intracellular receptor 1 (223 aa).

Residues 1-9 lie on the Lumenal side of the membrane; sequence MPWAAGRRW. The interval 2-8 is targeting to endoplasmic reticulum-associated lipid droplets; sequence PWAAGRR. A helical membrane pass occupies residues 10–30; that stretch reads AWITLILTIIAVLIQAAWLWL. Topologically, residues 31-223 are cytoplasmic; the sequence is GTQNFVFSRE…LTTYLFGQDS (193 aa). The tract at residues 99-106 is important for ligand-binding; sequence SLSEYVLL. Positions 177–223 are C-terminal hydrophobic region; that stretch reads VIPSTLFFALADTFFSTQDYLTLFYTLRAYARGLRLELTTYLFGQDS.

This sequence belongs to the ERG2 family. Homotrimer. Interacts with KCNA4. Interacts with KCNA2; cocaine consumption leads to increased interaction. Forms a ternary complex with ANK2 and ITPR3. The complex is disrupted by agonists. Interacts with RNF112 in an oxidative stress-regulated manner. As to expression, widely expressed with higher expression in liver, brain, kidney and thymus. Expressed throughout the brain with higher expression within cerebral cortex, hippocampus and cerebellum. Within the hippocampus expressed in cornu ammonis pyramidal neurons, the granular cells of the dentate gyrus as well as interneurons. Within the cerebellum, expressed in Purkinje cell bodies. Highly expressed in the brainstem and motor neurons of the spinal cord. Expressed by neural retina, retinal pigment epithelial cells and lens.

The protein localises to the nucleus inner membrane. Its subcellular location is the nucleus outer membrane. The protein resides in the nucleus envelope. It is found in the cytoplasmic vesicle. It localises to the endoplasmic reticulum membrane. The protein localises to the membrane. Its subcellular location is the lipid droplet. The protein resides in the cell junction. It is found in the cell membrane. It localises to the cell projection. The protein localises to the growth cone. Its subcellular location is the postsynaptic density membrane. Its function is as follows. Functions in lipid transport from the endoplasmic reticulum and is involved in a wide array of cellular functions probably through regulation of the biogenesis of lipid microdomains at the plasma membrane. Involved in the regulation of different receptors it plays a role in BDNF signaling and EGF signaling. Also regulates ion channels like the potassium channel and could modulate neurotransmitter release. Plays a role in calcium signaling through modulation together with ANK2 of the ITP3R-dependent calcium efflux at the endoplasmic reticulum. Plays a role in several other cell functions including proliferation, survival and death. Originally identified for its ability to bind various psychoactive drugs it is involved in learning processes, memory and mood alteration. Necessary for proper mitochondrial axonal transport in motor neurons, in particular the retrograde movement of mitochondria. Plays a role in protecting cells against oxidative stress-induced cell death via its interaction with RNF112. The protein is Sigma non-opioid intracellular receptor 1 (Sigmar1) of Mus musculus (Mouse).